The sequence spans 200 residues: Holliday junction branch migration complex subunit RuvA (200 aa).

The segment at 1–64 (MFTYFRGELI…EDLMQLFGFL (64 aa)) is domain I. The segment at 65-143 (EEEERQLFRL…KLRPSGGTKS (79 aa)) is domain II. A flexible linker region spans residues 144–148 (VSRLS). The segment at 148 to 200 (SESSMRDDAVNALVTLGFLRSVAQKAVTESLTSLRNPQVEDLVRDALLTIRTP) is domain III.

Belongs to the RuvA family. Homotetramer. Forms an RuvA(8)-RuvB(12)-Holliday junction (HJ) complex. HJ DNA is sandwiched between 2 RuvA tetramers; dsDNA enters through RuvA and exits via RuvB. An RuvB hexamer assembles on each DNA strand where it exits the tetramer. Each RuvB hexamer is contacted by two RuvA subunits (via domain III) on 2 adjacent RuvB subunits; this complex drives branch migration. In the full resolvosome a probable DNA-RuvA(4)-RuvB(12)-RuvC(2) complex forms which resolves the HJ.

It is found in the cytoplasm. The RuvA-RuvB-RuvC complex processes Holliday junction (HJ) DNA during genetic recombination and DNA repair, while the RuvA-RuvB complex plays an important role in the rescue of blocked DNA replication forks via replication fork reversal (RFR). RuvA specifically binds to HJ cruciform DNA, conferring on it an open structure. The RuvB hexamer acts as an ATP-dependent pump, pulling dsDNA into and through the RuvAB complex. HJ branch migration allows RuvC to scan DNA until it finds its consensus sequence, where it cleaves and resolves the cruciform DNA. In Chlorobium phaeobacteroides (strain BS1), this protein is Holliday junction branch migration complex subunit RuvA.